The primary structure comprises 120 residues: Dihydroneopterin aldolase (120 aa).

Substrate contacts are provided by glutamate 20 and methionine 114.

This sequence belongs to the archaeal dihydroneopterin aldolase family. In terms of assembly, homotetramer.

The enzyme catalyses 7,8-dihydroneopterin = 6-hydroxymethyl-7,8-dihydropterin + glycolaldehyde. Its function is as follows. Catalyzes the conversion of 7,8-dihydroneopterin (H2Neo) to 6-hydroxymethyl-7,8-dihydropterin (6-HMD). The polypeptide is Dihydroneopterin aldolase (Picrophilus torridus (strain ATCC 700027 / DSM 9790 / JCM 10055 / NBRC 100828 / KAW 2/3)).